The chain runs to 282 residues: Peptidoglycan-recognition protein LD (282 aa).

Residues 1 to 29 (MDSSHIAVRVARRSPSPAAVSQSSYGSLG) form a disordered region. At 1 to 88 (MDSSHIAVRV…RRNPTLHEDC (88 aa)) the chain is on the cytoplasmic side. The chain crosses the membrane as a helical span at residues 89–111 (FNWRSVGLLVMCASALALAAYLL). Over 112–282 (WRQTQTPDFG…PHYASHQTSK (171 aa)) the chain is Extracellular. A disulfide bridge connects residues C162 and C166. N222 carries an N-linked (GlcNAc...) asparagine glycan.

Belongs to the N-acetylmuramoyl-L-alanine amidase 2 family. As to expression, expressed in uninduced hemocytes and mbn-2 cells.

It localises to the cell membrane. Its function is as follows. Peptidoglycan-recognition protein probably involved in innate immunity by binding to peptidoglycans (PGN) of bacteria and activating the immune response. This Drosophila melanogaster (Fruit fly) protein is Peptidoglycan-recognition protein LD (PGRP-LD).